The sequence spans 158 residues: MSWITPKKAIMLAAAAEGGTKLNAFDNALLKMGIGNVNLVKLSSVIPAHIEWLDELPKNIPIGMLLPTVYTHIESDEPGSTISAALGIGLSEGNEGGLIYEYSGYCKKEEAEEMVKKMVEEGFRVRGWKLKEIKIVSAEITVKDKPAAAVAAVVMFPY.

The residue at position 44 (S44) is a Pyruvic acid (Ser).

This sequence belongs to the PdaD family. Pyruvate serves as cofactor.

It catalyses the reaction L-arginine + H(+) = agmatine + CO2. In Pyrococcus furiosus (strain ATCC 43587 / DSM 3638 / JCM 8422 / Vc1), this protein is Pyruvoyl-dependent arginine decarboxylase.